We begin with the raw amino-acid sequence, 359 residues long: MPLSRLIINDFRNITTCDIQLSSGFNFVIGPNGSGKTSVLEAIYLLGHGRSFKSSLTGRIIRNDCDELFIHGRFTTPEQFELPIGINKQRDGTTEVKIGGESGQKLAQLAKVLPLQLIHPEGFELVTDGPKFRRAFIDWGVFHVEPAFYDAWSRVKRLTKQRNALLKTANSYRELSYWDLELAQLSEKIDQWRVDYINHISEATQQICQAFLPEYDIKLSYYRGWDRETPYAELLKKNFERDKQLGYTVGGPNKADLRIKVAGTPVEDVLSRGQLKLMVCALRLAQGQHLTEATGKQCIYLIDDFASELDSHRRQLLAQYLKQTKAQVFISSITAEQIADMHDDESKMFEIEHGKIAQG.

An ATP-binding site is contributed by 30–37; it reads GPNGSGKT.

It belongs to the RecF family.

The protein localises to the cytoplasm. The RecF protein is involved in DNA metabolism; it is required for DNA replication and normal SOS inducibility. RecF binds preferentially to single-stranded, linear DNA. It also seems to bind ATP. In Aliivibrio fischeri (strain ATCC 700601 / ES114) (Vibrio fischeri), this protein is DNA replication and repair protein RecF.